The following is a 147-amino-acid chain: Ribonuclease pancreatic gamma-type (147 aa).

A signal peptide spans 1–25; that stretch reads MGLEKSFLLFSLLVLVLGWVQPSLG. Substrate is bound by residues K35 and R38. H40 (proton acceptor) is an active-site residue. 4 disulfide bridges follow: C54-C112, C68-C123, C86-C138, and C93-C100. Residues 69–73, K94, and R113 each bind substrate; that span reads KPMNT. H142 serves as the catalytic Proton donor.

Belongs to the pancreatic ribonuclease family. Monomer.

The protein localises to the secreted. It catalyses the reaction an [RNA] containing cytidine + H2O = an [RNA]-3'-cytidine-3'-phosphate + a 5'-hydroxy-ribonucleotide-3'-[RNA].. It carries out the reaction an [RNA] containing uridine + H2O = an [RNA]-3'-uridine-3'-phosphate + a 5'-hydroxy-ribonucleotide-3'-[RNA].. Functionally, endonuclease that catalyzes the cleavage of RNA on the 3' side of pyrimidine nucleotides. Acts on single-stranded and double-stranded RNA. The protein is Ribonuclease pancreatic gamma-type of Rattus rattus (Black rat).